The sequence spans 200 residues: NAD(P)H dehydrogenase (quinone) (200 aa).

The Flavodoxin-like domain maps to 4–191; the sequence is VLVLYYSSYG…DIARYQGKHV (188 aa). FMN contacts are provided by residues 10–15 and 79–81; these read SSYGHV and TRF. An NAD(+)-binding site is contributed by Tyr-12. Trp-99 contacts substrate. Residues 114–120 and His-135 each bind FMN; that span reads STGTQHG.

This sequence belongs to the WrbA family. FMN is required as a cofactor.

It carries out the reaction a quinone + NADH + H(+) = a quinol + NAD(+). The catalysed reaction is a quinone + NADPH + H(+) = a quinol + NADP(+). The chain is NAD(P)H dehydrogenase (quinone) from Burkholderia cenocepacia (strain ATCC BAA-245 / DSM 16553 / LMG 16656 / NCTC 13227 / J2315 / CF5610) (Burkholderia cepacia (strain J2315)).